The sequence spans 170 residues: Adenine phosphoribosyltransferase (170 aa).

The protein belongs to the purine/pyrimidine phosphoribosyltransferase family. As to quaternary structure, homodimer.

The protein resides in the cytoplasm. The enzyme catalyses AMP + diphosphate = 5-phospho-alpha-D-ribose 1-diphosphate + adenine. The protein operates within purine metabolism; AMP biosynthesis via salvage pathway; AMP from adenine: step 1/1. Catalyzes a salvage reaction resulting in the formation of AMP, that is energically less costly than de novo synthesis. The chain is Adenine phosphoribosyltransferase from Nitrosopumilus maritimus (strain SCM1).